Consider the following 773-residue polypeptide: Phenylalanine--tRNA ligase beta subunit (773 aa).

Residues 39-150 (LKAPDKVVVG…GKLELGRPLN (112 aa)) enclose the tRNA-binding domain. Residues 391–467 (KELPIIPISI…RIIGIDNIAS (77 aa)) enclose the B5 domain. The Mg(2+) site is built by D445, D451, E454, and E455. One can recognise an FDX-ACB domain in the interval 682–773 (SKFPAITRDL…TLKNLGLDLR (92 aa)).

The protein belongs to the phenylalanyl-tRNA synthetase beta subunit family. Type 1 subfamily. Tetramer of two alpha and two beta subunits. Mg(2+) serves as cofactor.

It localises to the cytoplasm. The catalysed reaction is tRNA(Phe) + L-phenylalanine + ATP = L-phenylalanyl-tRNA(Phe) + AMP + diphosphate + H(+). This is Phenylalanine--tRNA ligase beta subunit from Campylobacter jejuni (strain RM1221).